The chain runs to 140 residues: Nucleoside diphosphate kinase (140 aa).

Residues K11, F59, R87, T93, R104, and N114 each coordinate ATP. Catalysis depends on H117, which acts as the Pros-phosphohistidine intermediate.

Belongs to the NDK family. In terms of assembly, homotetramer. The cofactor is Mg(2+).

The protein resides in the cytoplasm. The enzyme catalyses a 2'-deoxyribonucleoside 5'-diphosphate + ATP = a 2'-deoxyribonucleoside 5'-triphosphate + ADP. The catalysed reaction is a ribonucleoside 5'-diphosphate + ATP = a ribonucleoside 5'-triphosphate + ADP. Its function is as follows. Major role in the synthesis of nucleoside triphosphates other than ATP. The ATP gamma phosphate is transferred to the NDP beta phosphate via a ping-pong mechanism, using a phosphorylated active-site intermediate. This Rhodopseudomonas palustris (strain ATCC BAA-98 / CGA009) protein is Nucleoside diphosphate kinase.